The chain runs to 1357 residues: DNA-directed RNA polymerase subunit beta (1357 aa).

The protein belongs to the RNA polymerase beta chain family. As to quaternary structure, the RNAP catalytic core consists of 2 alpha, 1 beta, 1 beta' and 1 omega subunit. When a sigma factor is associated with the core the holoenzyme is formed, which can initiate transcription.

The catalysed reaction is RNA(n) + a ribonucleoside 5'-triphosphate = RNA(n+1) + diphosphate. Functionally, DNA-dependent RNA polymerase catalyzes the transcription of DNA into RNA using the four ribonucleoside triphosphates as substrates. The chain is DNA-directed RNA polymerase subunit beta from Neorickettsia sennetsu (Ehrlichia sennetsu).